The chain runs to 254 residues: Small ribosomal subunit protein eS1 (254 aa).

Ala-2 bears the N-acetylalanine; partial mark.

This sequence belongs to the eukaryotic ribosomal protein eS1 family. Component of the small ribosomal subunit. Mature ribosomes consist of a small (40S) and a large (60S) subunit. The 40S subunit contains about 33 different proteins and 1 molecule of RNA (18S). The 60S subunit contains about 49 different proteins and 3 molecules of RNA (25S, 5.8S and 5S).

The protein localises to the cytoplasm. The sequence is that of Small ribosomal subunit protein eS1 from Zygosaccharomyces rouxii (strain ATCC 2623 / CBS 732 / NBRC 1130 / NCYC 568 / NRRL Y-229).